A 359-amino-acid chain; its full sequence is Tyrosine-protein phosphatase non-receptor type 7 (359 aa).

Positions Met1–Lys33 are disordered. An interaction with MAP kinases region spans residues Leu38–Asp51. Ser44 carries the phosphoserine modification. Phosphothreonine is present on Thr66. Phosphoserine occurs at positions 93 and 143. In terms of domain architecture, Tyrosine-protein phosphatase spans Leu97–Tyr349. Residues Asp257, Cys290–Arg296, and Gln334 each bind substrate. The Phosphocysteine intermediate role is filled by Cys290. A Cysteine sulfenic acid (-SOH) modification is found at Cys290.

Belongs to the protein-tyrosine phosphatase family. Non-receptor class subfamily. Post-translationally, oxidized at active site cysteine. Treatment with pervanadate (vanadate and H(2)O(2)) or with antigen enhanced oxidation of active site cysteine. As to expression, expressed in bone marrow-derived mast cells.

It is found in the cytoplasm. The protein localises to the cytoskeleton. It catalyses the reaction O-phospho-L-tyrosyl-[protein] + H2O = L-tyrosyl-[protein] + phosphate. Its activity is regulated as follows. Inhibited upon FCER1A triggering. Its function is as follows. May play a role in the regulation of T and B-lymphocyte development and signal transduction. This is Tyrosine-protein phosphatase non-receptor type 7 (Ptpn7) from Mus musculus (Mouse).